Consider the following 173-residue polypeptide: Alpha-crystallin A chain (173 aa).

At Met-1 the chain carries N-acetylmethionine. The tract at residues 1–63 is required for complex formation with BFSP1 and BFSP2; the sequence is MDIAIQHPWF…RTVLDSGISE (63 aa). Gln-6 bears the Deamidated glutamine; partial mark. Ser-45 is subject to Phosphoserine. Position 50 is a deamidated glutamine; partial (Gln-50). Residues 52–162 form the sHSP domain; sequence LFRTVLDSGI…GHSERAIPVS (111 aa). Residue Lys-70 is modified to N6-acetyllysine. At Gln-90 the chain carries Deamidated glutamine; partial. An N6-acetyllysine modification is found at Lys-99. A Zn(2+)-binding site is contributed by His-100. Asn-101 carries the deamidated asparagine; partial modification. Glu-102 and His-107 together coordinate Zn(2+). Ser-122 is modified (phosphoserine). At Asn-123 the chain carries Deamidated asparagine; partial. The tract at residues 144–173 is disordered; the sequence is PKVPSGVDAGHSERAIPVSREEKPSSAPSS. A compositionally biased stretch (basic and acidic residues) spans 153-167; it reads GHSERAIPVSREEKP. Residue His-154 participates in Zn(2+) binding. O-linked (GlcNAc) serine glycosylation is present at Ser-162.

It belongs to the small heat shock protein (HSP20) family. Heteromer composed of three CRYAA and one CRYAB subunits. Inter-subunit bridging via zinc ions enhances stability, which is crucial as there is no protein turn over in the lens. Can also form homodimers and homotetramers (dimers of dimers) which serve as the building blocks of homooligomers. Within homooligomers, the zinc-binding motif is created from residues of 3 different molecules. His-100 and Glu-102 from one molecule are ligands of the zinc ion, and His-107 and His-154 residues from additional molecules complete the site with tetrahedral coordination geometry. Part of a complex required for lens intermediate filament formation composed of BFSP1, BFSP2 and CRYAA. Acetylation at Lys-70 may increase chaperone activity. Post-translationally, undergoes age-dependent proteolytical cleavage at the C-terminus.

The protein resides in the cytoplasm. It localises to the nucleus. Contributes to the transparency and refractive index of the lens. Acts as a chaperone, preventing aggregation of various proteins under a wide range of stress conditions. Required for the correct formation of lens intermediate filaments as part of a complex composed of BFSP1, BFSP2 and CRYAA. The sequence is that of Alpha-crystallin A chain (CRYAA) from Pteropus poliocephalus (Grey-headed flying fox).